The chain runs to 422 residues: Phagosome assembly factor 1 (422 aa).

This sequence belongs to the PHAF1 family. As to quaternary structure, interacts with BCAS3; the interaction is requrired for the association with the phagophore.

It localises to the cytoplasm. It is found in the preautophagosomal structure. In terms of biological role, plays a regulatory role in autophagic activity. In complex with BCAS3, associates with the autophagosome formation site during both non-selective and selective autophagy. This is Phagosome assembly factor 1 (Phaf1) from Rattus norvegicus (Rat).